The chain runs to 1663 residues: Kotanin synthase (1663 aa).

The segment at 19 to 168 (RPHEFSFNTQ…PLPVYGGPCH (150 aa)) is N-terminal acylcarrier protein transacylase domain (SAT). Residues 301-731 (DSRIAVVGMS…GGNTSLLLEE (431 aa)) form the Ketosynthase family 3 (KS3) domain. Active-site for beta-ketoacyl synthase activity residues include Cys474, His609, and His650. Residues 830-1149 (FIFSGQGSFY…SMCTLQETGV (320 aa)) are malonyl-CoA:ACP transacylase (MAT) domain. Residues 1209–1527 (TALVHQIMEE…PRILMNRFFD (319 aa)) are product template (PT) domain. Residues 1213–1349 (HQIMEESFRP…GVVRCGDRQS (137 aa)) form an N-terminal hotdog fold region. Residues 1213–1523 (HQIMEESFRP…LRPLPRILMN (311 aa)) form the PKS/mFAS DH domain. The active-site Proton acceptor; for dehydratase activity is His1245. The tract at residues 1376–1523 (QASRVSRDLV…LRPLPRILMN (148 aa)) is C-terminal hotdog fold. The active-site Proton donor; for dehydratase activity is Asp1434. A disordered region spans residues 1544–1580 (DLPQVQHQPSPTTDSGPDDDPKDPNTGPLTPEVDLPV). Residues 1586 to 1663 (KANTKLVRGA…ELKEYLTASW (78 aa)) form the Carrier domain. O-(pantetheine 4'-phosphoryl)serine is present on Ser1623.

Pantetheine 4'-phosphate is required as a cofactor.

It functions in the pathway secondary metabolite biosynthesis. Non-reducing polyketide synthase; part of the gene cluster that mediates the biosynthesis of the bicoumarin kotanin. The non-reducing polyketide synthase ktnS first catalyzes the formation of the pentaketidic 4,7-dihydroxy-5-methylcoumarin from acetyl coenzyme A and 4 malonyl coenzyme A molecules. Further O-methylation by ktnB leads to the formation of 7-demethylsiderin. Then, an oxidative phenol coupling catalyzed by the cytochrome P450 monooxygenase ktnC forms the 8,8'-dimer P-orlandin via dimerization the monomeric precursor, 7-demethylsiderin. P-orlandin is subsequently O-methylated in a stepwise fashion to demethylkotanin and kotanin. The sequence is that of Kotanin synthase from Aspergillus niger (strain ATCC MYA-4892 / CBS 513.88 / FGSC A1513).